The following is a 206-amino-acid chain: Large ribosomal subunit protein uL4 (206 aa).

A disordered region spans residues 43–78; that stretch reads ARSGNRKQKDREEVKHTTKKPWRQKGTGRARAGMSS. Basic and acidic residues predominate over residues 49–58; sequence KQKDREEVKH. Residues 59 to 70 are compositionally biased toward basic residues; it reads TTKKPWRQKGTG.

Belongs to the universal ribosomal protein uL4 family. Part of the 50S ribosomal subunit.

Functionally, one of the primary rRNA binding proteins, this protein initially binds near the 5'-end of the 23S rRNA. It is important during the early stages of 50S assembly. It makes multiple contacts with different domains of the 23S rRNA in the assembled 50S subunit and ribosome. Forms part of the polypeptide exit tunnel. The polypeptide is Large ribosomal subunit protein uL4 (Cupriavidus metallidurans (strain ATCC 43123 / DSM 2839 / NBRC 102507 / CH34) (Ralstonia metallidurans)).